We begin with the raw amino-acid sequence, 228 residues long: MLNKLSAEFFGTFWLVFGGCGSAILAAAFPELGIGFLGVALAFGLTVLTMAYAVGGISGGHFNPAVSLSLTVAGRLPAKDLIPYWVAQVLGAIATAAILYVIASGKDGFSAGGLASNGYGELSPGGYSMMAGLLIEIILTAFFIIIILGSTSSLAPAGFAPIAIGFGLTLIHLVSIPVTNTSVNPARSTGVALFADTAALSQLWLFWVAPLVGAVIGAIIWKGLLGRD.

5 consecutive transmembrane segments (helical) span residues 1–21 (MLNK…GGCG), 46–66 (TVLT…NPAV), 82–102 (IPYW…LYVI), 129–149 (MMAG…IILG), and 154–174 (LAPA…IHLV). The NPA 1 signature appears at 63–65 (NPA). The NPA 2 motif lies at 184-186 (NPA). A helical membrane pass occupies residues 205–225 (LFWVAPLVGAVIGAIIWKGLL).

Belongs to the MIP/aquaporin (TC 1.A.8) family. In terms of assembly, homotetramer.

The protein localises to the cell inner membrane. The enzyme catalyses H2O(in) = H2O(out). Channel that permits osmotically driven movement of water in both directions. It is involved in the osmoregulation and in the maintenance of cell turgor during volume expansion in rapidly growing cells. It mediates rapid entry or exit of water in response to abrupt changes in osmolarity. This chain is Aquaporin Z, found in Brucella suis biovar 1 (strain 1330).